The chain runs to 1192 residues: MAAPRQPEEAVDDTEFIDDHHDQHRDSVHTRLRANSAIMQFQKILVANRGEIPIRIFRTAHELSLQTVAVYSHEDHLSMHRQKADEAYMIGKRGQYTPVGAYLAIDEIVKIALEHGVHLIHPGYGFLSENAEFARKVEQSGMVFVGPTPQTIESLGDKVSARQLAIRCDVPVVPGTPGPVERYEEVKAFTDTYGFPIIIKAAFGGGGRGMRVVRDQAELRDSFERATSEARSAFGNGTVFVERFLDRPKHIEVQLLGDNHGNVVHLFERDCSVQRRHQKVVEIAPAKDLPADVRDRILADAVKLAKSVNYRNAGTAEFLVDQQNRYYFIEINPRIQVEHTITEEITGIDIVAAQIQIAAGATLEQLGLTQDRISTRGFAIQCRITTEDPSKGFSPDTGKIEVYRSAGGNGVRLDGGNGFAGAIITPHYDSMLVKCTCRGSTYEIARRKVVRALVEFRIRGVKTNIPFLTSLLSHPVFVDGTCWTTFIDDTPELFALVGSQNRAQKLLAYLGDVAVNGSSIKGQIGEPKLKGDIIKPVLHDAAGKPLDVSVPATKGWKQILDSEGPEAFARAVRANKGCLIMDTTWRDAHQSLLATRVRTIDLLNIAHETSHALANAYSLECWGGATFDVAMRFLYEDPWDRLRKLRKAVPNIPFQMLLRGANGVAYSSLPDNAIYHFCKQAKKCGVDIFRVFDALNDVDQLEVGIKAVHAAEGVVEATICYSGDMLNPSKKYNLPYYLDLVDKVVQFKPHVLGIKDMAGVLKPQAARLLIGSIRERYPDLPIHVHTHDSAGTGVASMIACAQAGADAVDAATDSLSGMTSQPSIGAILASLEGTEHDPGLNSAQVRALDTYWAQLRLLYSPFEAGLTGPDPEVYEHEIPGGQLTNLIFQASQLGLGQQWAETKKAYESANDLLGDVVKVTPTSKVVGDLAQFMVSNKLTAEDVIARAGELDFPGSVLEFLEGLMGQPYGGFPEPLRSRALRDRRKLDKRPGLYLEPLDLAKIKSQIRENYGAATEYDVASYAMYPKVFEDYKKFVAKFGDLSVLPTRYFLAKPEIGEEFHVELEKGKVLILKLLAIGPLSEQTGQREVFYEVNGEVRQVSVDDKKASVENTARPKAELGDSSQVGAPMSGVVVEIRVHDGLEVKKGDPIAVLSAMKMEMVISAPHSGKVSSLLVKEGDSVDGQDLVCKIVKA.

Positions 1-23 (MAAPRQPEEAVDDTEFIDDHHDQ) are disordered. The 453-residue stretch at 40-492 (QFQKILVANR…WTTFIDDTPE (453 aa)) folds into the Biotin carboxylation domain. 3 residues coordinate ATP: lysine 158, glutamate 242, and histidine 277. The 198-residue stretch at 162 to 359 (RQLAIRCDVP…IVAAQIQIAA (198 aa)) folds into the ATP-grasp domain. Arginine 334 is an active-site residue. Residues 578-846 (CLIMDTTWRD…DPGLNSAQVR (269 aa)) enclose the Pyruvate carboxyltransferase domain. Residues 586–590 (RDAHQ) and arginine 659 contribute to the substrate site. Aspartate 587 contributes to the a divalent metal cation binding site. The a divalent metal cation site is built by lysine 755, histidine 785, and histidine 787. Lysine 755 bears the N6-carboxylysine mark. Threonine 920 contributes to the substrate binding site. The region spanning 1115–1190 (KAELGDSSQV…DGQDLVCKIV (76 aa)) is the Biotinyl-binding domain. Lysine 1156 is subject to N6-biotinyllysine.

Biotin is required as a cofactor. It depends on Zn(2+) as a cofactor.

It localises to the cytoplasm. It carries out the reaction hydrogencarbonate + pyruvate + ATP = oxaloacetate + ADP + phosphate + H(+). Its pathway is carbohydrate biosynthesis; gluconeogenesis. In terms of biological role, pyruvate carboxylase catalyzes a 2-step reaction, involving the ATP-dependent carboxylation of the covalently attached biotin in the first step and the transfer of the carboxyl group to pyruvate in the second. This Aspergillus niger protein is Pyruvate carboxylase (pyc).